The following is a 1578-amino-acid chain: E3 ubiquitin-protein ligase HECW2 (1578 aa).

Phosphoserine is present on Ser-48. The C2 domain occupies 171-298; the sequence is MEGGASGSLH…LERQAGDQML (128 aa). Disordered regions lie at residues 341–453 and 496–802; these read HTVN…FPTD and IDDG…PSVR. The segment covering 386 to 406 has biased composition (polar residues); the sequence is RTSSTLEIDTEDLISTSSRNS. The segment covering 518–532 has biased composition (basic and acidic residues); that stretch reads ASIHETASLEERLEN. The segment covering 559–576 has biased composition (polar residues); the sequence is SADQGSTELCSSQEVDQP. A compositionally biased stretch (low complexity) spans 577-593; sequence TSGADAGASDTSGGSRR. Composition is skewed to polar residues over residues 597-614, 643-664, and 688-708; these read ETES…SSET, SSCN…SSLE, and PTSS…SSLP. 3 stretches are compositionally biased toward low complexity: residues 721 to 735, 746 to 755, and 769 to 782; these read AAEA…ELGE, AAAAAPAAAA, and AQGA…QEEG. The segment at 737–1074 is interaction with TP73; the sequence is WQRRGSLEGA…PRPSSTFNTV (338 aa). The WW 1 domain maps to 813–846; it reads EALPPNWEARIDSHGRIFYVDHVNRTTTWQRPTA. A coiled-coil region spans residues 853 to 880; that stretch reads LQRSNSIQQMEQLNRRYQSIRRTMTNER. Ser-858 and Ser-915 each carry phosphoserine. A WW 2 domain is found at 991-1024; sequence LELPRGWEMKHDHQGKAFFVDHNSRTTTFIDPRL. 2 disordered regions span residues 1030–1075 and 1167–1193; these read RPTS…NTVS and CQSP…RAPA. Residues 1037–1046 are compositionally biased toward basic residues; it reads HRQHLTRQRS. Over residues 1167–1187 the composition is skewed to polar residues; the sequence is CQSPRGSPVSSPQNSPGTQRA. Residue Ser-1181 is modified to Phosphoserine. The region spanning 1243–1578 is the HECT domain; that stretch reads SRKDLQRNKL…VEETSTFGLE (336 aa). The active-site Glycyl thioester intermediate is the Cys-1546.

In terms of assembly, interacts with TP73. Interacts with FZR1.

The protein resides in the cytoplasm. It localises to the cytoskeleton. The protein localises to the spindle. The enzyme catalyses S-ubiquitinyl-[E2 ubiquitin-conjugating enzyme]-L-cysteine + [acceptor protein]-L-lysine = [E2 ubiquitin-conjugating enzyme]-L-cysteine + N(6)-ubiquitinyl-[acceptor protein]-L-lysine.. Its pathway is protein modification; protein ubiquitination. In terms of biological role, E3 ubiquitin-protein ligase that mediates ubiquitination of TP73. Acts to stabilize TP73 and enhance activation of transcription by TP73. Involved in the regulation of mitotic metaphase/anaphase transition. The protein is E3 ubiquitin-protein ligase HECW2 (Hecw2) of Mus musculus (Mouse).